The following is an 885-amino-acid chain: Alanine--tRNA ligase (885 aa).

Residues 426–444 (QEQKTRARQDRREKQRGGA) are compositionally biased toward basic and acidic residues. Residues 426–445 (QEQKTRARQDRREKQRGGAE) form a disordered region. 4 residues coordinate Zn(2+): H568, H572, C671, and H675.

Belongs to the class-II aminoacyl-tRNA synthetase family. It depends on Zn(2+) as a cofactor.

Its subcellular location is the cytoplasm. It carries out the reaction tRNA(Ala) + L-alanine + ATP = L-alanyl-tRNA(Ala) + AMP + diphosphate. In terms of biological role, catalyzes the attachment of alanine to tRNA(Ala) in a two-step reaction: alanine is first activated by ATP to form Ala-AMP and then transferred to the acceptor end of tRNA(Ala). Also edits incorrectly charged Ser-tRNA(Ala) and Gly-tRNA(Ala) via its editing domain. The chain is Alanine--tRNA ligase from Chlorobium phaeovibrioides (strain DSM 265 / 1930) (Prosthecochloris vibrioformis (strain DSM 265)).